Reading from the N-terminus, the 952-residue chain is Alpha-L-rhamnosidase (952 aa).

The N-terminal stretch at 1 to 21 (MKYNKLLFSLLLLAVFCFSCK) is a signal peptide. Alpha-L-rhamnose is bound by residues Asp-520, 524–525 (RE), Asp-532, and Trp-594. Glu-525 acts as the Proton donor in catalysis. The active-site Proton acceptor is the Glu-809. His-826 provides a ligand contact to alpha-L-rhamnose.

The protein belongs to the glycosyl hydrolase 78 family.

It localises to the cell membrane. The enzyme catalyses Hydrolysis of terminal non-reducing alpha-L-rhamnose residues in alpha-L-rhamnosides.. In terms of biological role, alpha-L-rhamnosidase that may be involved in ulvan degradation. Ulvan is the main polysaccharide component of the Ulvales (green seaweed) cell wall. It is composed of disaccharide building blocks comprising 3-sulfated rhamnose (Rha3S) linked to D-glucuronic acid (GlcA), L-iduronic acid (IduA), or D-xylose (Xyl). This chain is Alpha-L-rhamnosidase, found in Formosa agariphila (strain DSM 15362 / KCTC 12365 / LMG 23005 / KMM 3901 / M-2Alg 35-1).